Reading from the N-terminus, the 520-residue chain is Putative thymidine phosphorylase 1 (520 aa).

The protein belongs to the thymidine/pyrimidine-nucleoside phosphorylase family. Type 2 subfamily.

It carries out the reaction thymidine + phosphate = 2-deoxy-alpha-D-ribose 1-phosphate + thymine. This is Putative thymidine phosphorylase 1 from Cupriavidus necator (strain ATCC 17699 / DSM 428 / KCTC 22496 / NCIMB 10442 / H16 / Stanier 337) (Ralstonia eutropha).